Reading from the N-terminus, the 153-residue chain is Arginine repressor (153 aa).

This sequence belongs to the ArgR family.

The protein localises to the cytoplasm. It participates in amino-acid biosynthesis; L-arginine biosynthesis [regulation]. Regulates arginine biosynthesis genes. This is Arginine repressor from Actinobacillus pleuropneumoniae serotype 7 (strain AP76).